The primary structure comprises 501 residues: Cryptochrome-1 (501 aa).

Positions 5–134 (KKTIVWFRRD…SVQSYNGDLC (130 aa)) constitute a Photolyase/cryptochrome alpha/beta domain. FAD is bound by residues Y231 and 243–247 (TSLLS). R356 is a binding site for ATP. Residues D386 and D388 each contribute to the FAD site. Residue D405 participates in ATP binding.

Belongs to the DNA photolyase class-1 family. In terms of assembly, homodimer. FAD is required as a cofactor. It depends on (6R)-5,10-methylene-5,6,7,8-tetrahydrofolate as a cofactor.

Functionally, mediates blue light-induced gene expression in addition to its role in blue light-dependent inhibition of stem growth. This is Cryptochrome-1 (PHR1) from Sinapis alba (White mustard).